The primary structure comprises 262 residues: Virulence plasmid protein pGP6-D-related protein (262 aa).

It belongs to the UPF0137 (pGP6-D) family.

The protein is Virulence plasmid protein pGP6-D-related protein of Chlamydia muridarum (strain MoPn / Nigg).